The following is a 300-amino-acid chain: tRNA uridine(34) hydroxylase (300 aa).

The Rhodanese domain maps to 128 to 222; the sequence is ADPEVIVVDT…YLEDVPQAQS (95 aa). The active-site Cysteine persulfide intermediate is Cys182.

It belongs to the TrhO family.

It catalyses the reaction uridine(34) in tRNA + AH2 + O2 = 5-hydroxyuridine(34) in tRNA + A + H2O. Catalyzes oxygen-dependent 5-hydroxyuridine (ho5U) modification at position 34 in tRNAs. This Deinococcus radiodurans (strain ATCC 13939 / DSM 20539 / JCM 16871 / CCUG 27074 / LMG 4051 / NBRC 15346 / NCIMB 9279 / VKM B-1422 / R1) protein is tRNA uridine(34) hydroxylase.